Consider the following 84-residue polypeptide: uncharacterized protein (84 aa).

This is an uncharacterized protein from Orgyia pseudotsugata multicapsid polyhedrosis virus (OpMNPV).